The following is a 1308-amino-acid chain: D-lysergyl-peptide-synthetase subunit 2 (1308 aa).

The segment at 261 to 658 (EWCRRTPSAV…CRKSTQVKLR (398 aa)) is adenylation (A) domain. A Carrier domain is found at 803–871 (IEEAFQRFFA…ELSELARHTK (69 aa)). Ser835 carries the O-(pantetheine 4'-phosphoryl)serine modification. Residues 910–1299 (EDVYPCTPLQ…HAAPRTLIGD (390 aa)) form a condensation (C) domain region.

The protein belongs to the NRP synthetase family.

Its pathway is alkaloid biosynthesis; ergot alkaloid biosynthesis. D-lysergyl-peptide-synthetase subunit 2; part of the gene cluster that mediates the biosynthesis of fungal ergot alkaloid. DmaW catalyzes the first step of ergot alkaloid biosynthesis by condensing dimethylallyl diphosphate (DMAP) and tryptophan to form 4-dimethylallyl-L-tryptophan. The second step is catalyzed by the methyltransferase easF that methylates 4-dimethylallyl-L-tryptophan in the presence of S-adenosyl-L-methionine, resulting in the formation of 4-dimethylallyl-L-abrine. The catalase easC and the FAD-dependent oxidoreductase easE then transform 4-dimethylallyl-L-abrine to chanoclavine-I which is further oxidized by EasD in the presence of NAD(+), resulting in the formation of chanoclavine-I aldehyde. Agroclavine dehydrogenase easG then mediates the conversion of chanoclavine-I aldehyde to agroclavine via a non-enzymatic adduct reaction: the substrate is an iminium intermediate that is formed spontaneously from chanoclavine-I aldehyde in the presence of glutathione. The presence of easA is not required to complete this reaction. Further conversion of agroclavine to paspalic acid is a two-step process involving oxidation of agroclavine to elymoclavine and of elymoclavine to paspalic acid, the second step being performed by the elymoclavine oxidase cloA. Paspalic acid is then further converted to D-lysergic acid. Ergopeptines are assembled from D-lysergic acid and three different amino acids by the D-lysergyl-peptide-synthetases composed each of a monomudular and a trimodular nonribosomal peptide synthetase subunit. LpsB and lpsC encode the monomodular subunits responsible for D-lysergic acid activation and incorporation into the ergopeptine backbone. LpsA1 and A2 subunits encode the trimodular nonribosomal peptide synthetase assembling the tripeptide portion of ergopeptines. LpsA1 is responsible for formation of the major ergopeptine, ergotamine, and lpsA2 for alpha-ergocryptine, the minor ergopeptine of the total alkaloid mixture elaborated by C.purpurea. D-lysergyl-tripeptides are assembled by the nonribosomal peptide synthetases and released as N-(D-lysergyl-aminoacyl)-lactams. Cyclolization of the D-lysergyl-tripeptides is performed by the Fe(2+)/2-ketoglutarate-dependent dioxygenase easH which introduces a hydroxyl group into N-(D-lysergyl-aminoacyl)-lactam at alpha-C of the aminoacyl residue followed by spontaneous condensation with the terminal lactam carbonyl group. This chain is D-lysergyl-peptide-synthetase subunit 2, found in Claviceps purpurea (Ergot fungus).